We begin with the raw amino-acid sequence, 468 residues long: 6-phospho-beta-galactosidase (468 aa).

Residues Gln-19, His-116, Asn-159, Glu-160, and Asn-297 each contribute to the D-galactose 6-phosphate site. The Proton donor role is filled by Glu-160. Glu-375 serves as the catalytic Nucleophile. Residues Ser-428, Trp-429, Lys-435, and Tyr-437 each contribute to the D-galactose 6-phosphate site.

This sequence belongs to the glycosyl hydrolase 1 family.

It catalyses the reaction a 6-phospho-beta-D-galactoside + H2O = D-galactose 6-phosphate + an alcohol. It functions in the pathway carbohydrate metabolism; lactose degradation; D-galactose 6-phosphate and beta-D-glucose from lactose 6-phosphate: step 1/1. The chain is 6-phospho-beta-galactosidase from Streptococcus pyogenes serotype M5 (strain Manfredo).